We begin with the raw amino-acid sequence, 341 residues long: Elongation factor G (341 aa).

The protein belongs to the GTP-binding elongation factor family. EF-G/EF-2 subfamily.

It localises to the cytoplasm. Its function is as follows. Catalyzes the GTP-dependent ribosomal translocation step during translation elongation. During this step, the ribosome changes from the pre-translocational (PRE) to the post-translocational (POST) state as the newly formed A-site-bound peptidyl-tRNA and P-site-bound deacylated tRNA move to the P and E sites, respectively. Catalyzes the coordinated movement of the two tRNA molecules, the mRNA and conformational changes in the ribosome. The sequence is that of Elongation factor G (fus) from Streptomyces ramocissimus.